The primary structure comprises 118 residues: Cell division protein FtsB (118 aa).

Residues 1–6 (MRNWRW) lie on the Cytoplasmic side of the membrane. The chain crosses the membrane as a helical span at residues 7–24 (LLLVLAALLAWLQHRFWF). Residues 25–118 (GPGNSGEVRM…DLSQPRREKR (94 aa)) are Periplasmic-facing. Residues 30 to 66 (GEVRMLQVQIVQQHQENERLRQRNASLAAEVKNLKDG) are a coiled coil. Positions 98–118 (LPNDTSADHGVDLSQPRREKR) are disordered. The span at 103-118 (SADHGVDLSQPRREKR) shows a compositional bias: basic and acidic residues.

The protein belongs to the FtsB family. Part of a complex composed of FtsB, FtsL and FtsQ.

It localises to the cell inner membrane. In terms of biological role, essential cell division protein. May link together the upstream cell division proteins, which are predominantly cytoplasmic, with the downstream cell division proteins, which are predominantly periplasmic. The polypeptide is Cell division protein FtsB (Xylella fastidiosa (strain M12)).